The sequence spans 156 residues: ATP synthase subunit b', organellar chromatophore (156 aa).

Residues 23–43 (TLPLMAIQVVFLTFILNAIFF) traverse the membrane as a helical segment.

The protein belongs to the ATPase B chain family. F-type ATPases have 2 components, F(1) - the catalytic core - and F(0) - the membrane proton channel. F(1) has five subunits: alpha(3), beta(3), gamma(1), delta(1), epsilon(1). F(0) has four main subunits: a(1), b(1), b'(1) and c(10-14). The alpha and beta chains form an alternating ring which encloses part of the gamma chain. F(1) is attached to F(0) by a central stalk formed by the gamma and epsilon chains, while a peripheral stalk is formed by the delta, b and b' chains.

It localises to the plastid. Its subcellular location is the organellar chromatophore thylakoid membrane. F(1)F(0) ATP synthase produces ATP from ADP in the presence of a proton or sodium gradient. F-type ATPases consist of two structural domains, F(1) containing the extramembraneous catalytic core and F(0) containing the membrane proton channel, linked together by a central stalk and a peripheral stalk. During catalysis, ATP synthesis in the catalytic domain of F(1) is coupled via a rotary mechanism of the central stalk subunits to proton translocation. In terms of biological role, component of the F(0) channel, it forms part of the peripheral stalk, linking F(1) to F(0). The b'-subunit is a diverged and duplicated form of b found in plants and photosynthetic bacteria. This Paulinella chromatophora protein is ATP synthase subunit b', organellar chromatophore.